The sequence spans 510 residues: Propionyl-CoA carboxylase beta chain (510 aa).

One can recognise a CoA carboxyltransferase N-terminal domain in the interval 1–257; that stretch reads MKDILEQLED…NNREKPPVRP (257 aa). Residues 1 to 504 are carboxyltransferase; sequence MKDILEQLED…NKSVQMPWKK (504 aa). A CoA carboxyltransferase C-terminal domain is found at 261–504; the sequence is DPDRIEPSLD…NKSVQMPWKK (244 aa). The segment at 292–325 is acyl-CoA binding; the sequence is DEGDFYEIQEEFAKNIITGFIRLEGRTVGVVANQ.

This sequence belongs to the AccD/PCCB family. As to quaternary structure, the holoenzyme is a dodecamer composed of 6 PccA/alpha subunits and 6 PccB/beta subunits.

It carries out the reaction propanoyl-CoA + hydrogencarbonate + ATP = (S)-methylmalonyl-CoA + ADP + phosphate + H(+). Its pathway is metabolic intermediate metabolism; propanoyl-CoA degradation; succinyl-CoA from propanoyl-CoA: step 1/3. Its function is as follows. This is one of the 2 subunits of the biotin-dependent propionyl-CoA carboxylase (PCC), the enzyme catalyzing the carboxylation of propionyl-CoA/propanoyl-CoA to D-methylmalonyl-CoA/(S)-methylmalonyl-CoA. Within the holoenzyme, the alpha subunit catalyzes the ATP-dependent carboxylation of the biotin carried by the biotin carboxyl carrier (BCC) domain, while the beta subunit then tranfers the carboxyl group from carboxylated biotin to propionyl-CoA. This Roseobacter denitrificans (strain ATCC 33942 / OCh 114) (Erythrobacter sp. (strain OCh 114)) protein is Propionyl-CoA carboxylase beta chain.